Here is a 478-residue protein sequence, read N- to C-terminus: Protein nucleotidyltransferase YdiU (478 aa).

Residues Gly84, Gly86, Arg87, Lys107, Asp119, Gly120, Arg170, and Arg177 each contribute to the ATP site. Catalysis depends on Asp246, which acts as the Proton acceptor. Mg(2+) contacts are provided by Asn247 and Asp256. Residue Asp256 coordinates ATP.

It belongs to the SELO family. Mg(2+) serves as cofactor. The cofactor is Mn(2+).

It catalyses the reaction L-seryl-[protein] + ATP = 3-O-(5'-adenylyl)-L-seryl-[protein] + diphosphate. The catalysed reaction is L-threonyl-[protein] + ATP = 3-O-(5'-adenylyl)-L-threonyl-[protein] + diphosphate. It carries out the reaction L-tyrosyl-[protein] + ATP = O-(5'-adenylyl)-L-tyrosyl-[protein] + diphosphate. The enzyme catalyses L-histidyl-[protein] + UTP = N(tele)-(5'-uridylyl)-L-histidyl-[protein] + diphosphate. It catalyses the reaction L-seryl-[protein] + UTP = O-(5'-uridylyl)-L-seryl-[protein] + diphosphate. The catalysed reaction is L-tyrosyl-[protein] + UTP = O-(5'-uridylyl)-L-tyrosyl-[protein] + diphosphate. Functionally, nucleotidyltransferase involved in the post-translational modification of proteins. It can catalyze the addition of adenosine monophosphate (AMP) or uridine monophosphate (UMP) to a protein, resulting in modifications known as AMPylation and UMPylation. This is Protein nucleotidyltransferase YdiU from Escherichia coli O127:H6 (strain E2348/69 / EPEC).